Consider the following 158-residue polypeptide: Ribosome maturation factor RimP (158 aa).

It belongs to the RimP family.

The protein resides in the cytoplasm. Its function is as follows. Required for maturation of 30S ribosomal subunits. The chain is Ribosome maturation factor RimP from Deinococcus radiodurans (strain ATCC 13939 / DSM 20539 / JCM 16871 / CCUG 27074 / LMG 4051 / NBRC 15346 / NCIMB 9279 / VKM B-1422 / R1).